A 652-amino-acid polypeptide reads, in one-letter code: Carboxypeptidase S1 homolog A (652 aa).

Positions 1-19 (MRLAASIAVALPVIGAASA) are cleaved as a signal peptide. Cys50 and Cys121 are joined by a disulfide. N-linked (GlcNAc...) asparagine glycosylation is found at Asn77, Asn132, Asn161, Asn168, Asn184, and Asn202. Ser238 is an active-site residue. Asn260, Asn299, Asn347, and Asn410 each carry an N-linked (GlcNAc...) asparagine glycan. 2 cysteine pairs are disulfide-bonded: Cys325–Cys361 and Cys332–Cys354. Asp458 is an active-site residue. Residue Cys461 participates in substrate binding. N-linked (GlcNAc...) asparagine glycans are attached at residues Asn474, Asn492, and Asn505. His516 is an active-site residue. Glu517 serves as a coordination point for substrate. Asn594 carries N-linked (GlcNAc...) asparagine glycosylation. The disordered stretch occupies residues 608–628 (AASKGNPPPTTTSSPTASPTA). Residues 618–628 (TTSSPTASPTA) are compositionally biased toward low complexity. Residue Gly629 is the site of GPI-anchor amidated glycine attachment. Residues 630–652 (SAMLKAPVAMLAISALTVLAFYL) constitute a propeptide, removed in mature form.

The protein belongs to the peptidase S10 family.

The protein localises to the cell membrane. The enzyme catalyses Preferential release of a C-terminal arginine or lysine residue.. Extracellular serine carboxypeptidase that contributes to pathogenicity. This Trichophyton verrucosum (strain HKI 0517) protein is Carboxypeptidase S1 homolog A (SCPA).